The following is a 799-amino-acid chain: Protein translocase subunit SecA 1 (799 aa).

ATP-binding positions include Q85, 103-107 (GEGKT), and D504.

Belongs to the SecA family. As to quaternary structure, monomer and homodimer. Part of the essential Sec protein translocation apparatus which comprises SecA, SecYEG and auxiliary proteins SecDF. Other proteins may also be involved.

It is found in the cell membrane. Its subcellular location is the cytoplasm. The catalysed reaction is ATP + H2O + cellular proteinSide 1 = ADP + phosphate + cellular proteinSide 2.. Part of the Sec protein translocase complex. Interacts with the SecYEG preprotein conducting channel. Has a central role in coupling the hydrolysis of ATP to the transfer of proteins into and across the cell membrane, serving as an ATP-driven molecular motor driving the stepwise translocation of polypeptide chains across the membrane. This is Protein translocase subunit SecA 1 from Lactobacillus johnsonii (strain CNCM I-12250 / La1 / NCC 533).